A 681-amino-acid polypeptide reads, in one-letter code: Terpene synthase 6, chloroplastic (681 aa).

Residues D433, D437, N577, and E585 each coordinate Mg(2+). The short motif at 433 to 437 is the DDXXD motif element; the sequence is DDLFD.

The protein belongs to the terpene synthase family. The cofactor is Mg(2+). Expressed in leaves.

It is found in the plastid. The protein resides in the chloroplast. Its pathway is secondary metabolite biosynthesis; terpenoid biosynthesis. Functionally, may be involved in the biosynthesis of ent-kaurene diterpenoids natural products such as oridonin, miltiradiene, eriocalyxin B and nezukol, known to exhibit antitumor, anti-inflammatory and antibacterial activities. The sequence is that of Terpene synthase 6, chloroplastic from Isodon rubescens (Rabdosia rubescens).